Reading from the N-terminus, the 361-residue chain is MGSSFGKLFTISTFGESHGGGVGVIIDGCPPRLELDINEIQNDLNRRRPGQSKITTPRNESDEVEILSGLLGNKTLGTPIAMVVRNKDHRPKDYSEIKKTFRPSHADATYQKKYGIQASSGGGRASARETIGRVAAGSVAKQLLTKFAKTEILAWVKRIHDIEAEIHPSEVTFDEIEKNIVRCPNQSAADLMIQRVEAFGKEGDSCGGVIECVVRNPPIGLGMPVFDKLEADLAKALMSLPATKGFEVGSGFGGTYLKGSEHNDPFLPSDSNQLKTATNNSGGIQGGISNGEDIVLRVGFKPTATIRKSQKTIDEDGNAITLKATGRHDPCVLPRAVPMVEAMVALVLADHLLRQRGQCTD.

Arg-47 is a binding site for NADP(+). FMN is bound by residues 124 to 126 (RAS), Gly-286, 301 to 305 (KPTAT), and Arg-327.

This sequence belongs to the chorismate synthase family. In terms of assembly, homotetramer. It depends on FMNH2 as a cofactor.

It carries out the reaction 5-O-(1-carboxyvinyl)-3-phosphoshikimate = chorismate + phosphate. Its pathway is metabolic intermediate biosynthesis; chorismate biosynthesis; chorismate from D-erythrose 4-phosphate and phosphoenolpyruvate: step 7/7. Catalyzes the anti-1,4-elimination of the C-3 phosphate and the C-6 proR hydrogen from 5-enolpyruvylshikimate-3-phosphate (EPSP) to yield chorismate, which is the branch point compound that serves as the starting substrate for the three terminal pathways of aromatic amino acid biosynthesis. This reaction introduces a second double bond into the aromatic ring system. The polypeptide is Chorismate synthase (Prochlorococcus marinus (strain NATL1A)).